A 352-amino-acid polypeptide reads, in one-letter code: Neutral protease 2 (352 aa).

The N-terminal stretch at 1–19 (MRVTTLSTALFALASTAVS) is a signal peptide. The propeptide occupies 20–175 (APTAGSSSPG…TKALSQLTRR (156 aa)). 3 disulfides stabilise this stretch: Cys-181–Cys-253, Cys-260–Cys-278, and Cys-292–Cys-352. His-303 provides a ligand contact to Zn(2+). Residue Glu-304 is part of the active site. Zn(2+) contacts are provided by His-307 and Asp-318.

The protein belongs to the peptidase M35 family. Requires Zn(2+) as cofactor.

The enzyme catalyses Preferential cleavage of bonds with hydrophobic residues in P1'. Also 3-Asn-|-Gln-4 and 8-Gly-|-Ser-9 bonds in insulin B chain.. In terms of biological role, metalloprotease that shows high activities on basic nuclear substrates such as histone and protamine. This is Neutral protease 2 from Aspergillus oryzae (strain ATCC 42149 / RIB 40) (Yellow koji mold).